The chain runs to 246 residues: Probable transcriptional regulatory protein GWCH70_2524 (246 aa).

Belongs to the TACO1 family.

Its subcellular location is the cytoplasm. The protein is Probable transcriptional regulatory protein GWCH70_2524 of Geobacillus sp. (strain WCH70).